Consider the following 558-residue polypeptide: Potassium-transporting ATPase potassium-binding subunit (558 aa).

The next 12 membrane-spanning stretches (helical) occupy residues 1–21 (MEIILFLTMMVMIAYVFSGYL), 66–86 (FNGFMGLITFVLLIVQQWLFL), 127–147 (MIVMTYLMFTSSASGYAVCIA), 166–186 (IVRFIVRVLLPLSCLISILLM), 245–265 (IWSDFIEMGSMMLLPMSMLFL), 281–301 (ALILFVAMFFIFIAILTLTMW), 327–347 (FGAGLSALFTVITTAFTTGSV), 354–374 (LTPLGGLGPMVLMMLNVVFGG), 377–397 (VGLMNLLIYVLLTVFICSLMV), 416–436 (IVLVFLIHPILILVFSALAFM), 482–502 (ISTGIIMLLSRYIPIILQLLI), and 531–551 (IVFIVLLSGLTFIPVLLLGPI).

It belongs to the KdpA family. As to quaternary structure, the system is composed of three essential subunits: KdpA, KdpB and KdpC.

It localises to the cell membrane. In terms of biological role, part of the high-affinity ATP-driven potassium transport (or Kdp) system, which catalyzes the hydrolysis of ATP coupled with the electrogenic transport of potassium into the cytoplasm. This subunit binds the extracellular potassium ions and delivers the ions to the membrane domain of KdpB through an intramembrane tunnel. This is Potassium-transporting ATPase potassium-binding subunit from Staphylococcus aureus (strain bovine RF122 / ET3-1).